Consider the following 266-residue polypeptide: MAYKPQFYPGNTLIAENRRKHMNPEVELKKLRDIPDDEIVKILGHRNPGESYKTVHPPLEEMDFEEDPIKDIVEPIQGAKEGVRVRYIQFADSMYNAPAQPYDRARTYMWRFRGIDTGTLSGRQVIEMRELDLEKISKNFLIDTEFFDPATCGIRGATVHGHSLRLDENGLMFDGLQRYIYDEKTGHVLYVKDQVGRPLDEPVDVGEPLPHDYLAKITTIYRKDNIGMREDKEALEVVQIIHEARTKGGFGLEVFKKDLKKRLGEE.

Residue arginine 123 participates in coenzyme M binding.

Belongs to the methyl-coenzyme M reductase gamma subunit family. MCR is a hexamer of two alpha, two beta, and two gamma chains, forming a dimer of heterotrimers. Requires coenzyme F430 as cofactor.

The catalysed reaction is coenzyme B + methyl-coenzyme M = methane + coenzyme M-coenzyme B heterodisulfide. It participates in one-carbon metabolism; methyl-coenzyme M reduction; methane from methyl-coenzyme M: step 1/1. Its function is as follows. Component of the methyl-coenzyme M reductase (MCR) I that catalyzes the reductive cleavage of methyl-coenzyme M (CoM-S-CH3 or 2-(methylthio)ethanesulfonate) using coenzyme B (CoB or 7-mercaptoheptanoylthreonine phosphate) as reductant which results in the production of methane and the mixed heterodisulfide of CoB and CoM (CoM-S-S-CoB). This is the final step in methanogenesis. In Methanocaldococcus jannaschii (strain ATCC 43067 / DSM 2661 / JAL-1 / JCM 10045 / NBRC 100440) (Methanococcus jannaschii), this protein is Methyl-coenzyme M reductase II subunit gamma (mrtG).